The sequence spans 237 residues: Ribosomal RNA large subunit methyltransferase E (237 aa).

Gly-76, Trp-78, Asp-99, Asp-115, and Asp-139 together coordinate S-adenosyl-L-methionine. The Proton acceptor role is filled by Lys-179.

Belongs to the class I-like SAM-binding methyltransferase superfamily. RNA methyltransferase RlmE family.

Its subcellular location is the cytoplasm. The catalysed reaction is uridine(2552) in 23S rRNA + S-adenosyl-L-methionine = 2'-O-methyluridine(2552) in 23S rRNA + S-adenosyl-L-homocysteine + H(+). In terms of biological role, specifically methylates the uridine in position 2552 of 23S rRNA at the 2'-O position of the ribose in the fully assembled 50S ribosomal subunit. The chain is Ribosomal RNA large subunit methyltransferase E from Rhodopseudomonas palustris (strain TIE-1).